The chain runs to 236 residues: CQFDGNTISGYKRMIATKDSFQSFNVTEPHISASALEWIDPDSSLRDHINVIVSRDLSFQDLSETPCQIDLSTASIDGAWGSGVGFNLVCTVSLTECSAFLTSIKACDAAMCYGSTTANLVRGQNTIHIVGKGGHSGSKFMCCHDTKCSTTGLVAAAPHLDRVTGYNQADSDKIFDDGAPECGMSCWFKKSGEWILGVLNGNWMVVAVLIALLILSILLFTLCCPRRPSYRKEHKP.

The Lumenal segment spans residues 1 to 202 (CQFDGNTISG…EWILGVLNGN (202 aa)). A glycan (N-linked (GlcNAc...) asparagine; by host) is linked at N25. Intrachain disulfides connect C67-C97, C90-C142, C107-C112, C143-C148, and C182-C186. Residues 203-223 (WMVVAVLIALLILSILLFTLC) traverse the membrane as a helical segment. 2 binding to the ribonucleoprotein regions span residues 219–231 (LFTL…PSYR) and 219–236 (LFTL…EHKP). Topologically, residues 224 to 236 (CPRRPSYRKEHKP) are cytoplasmic.

This sequence belongs to the hantavirus envelope glycoprotein family. As to quaternary structure, homodimer. Homotetramer; forms heterotetrameric Gn-Gc spikes in the pre-fusion conformation. Homotrimer; forms homotrimer in the post-fusion conformation at acidic pH. Interacts (via C-terminus) with the nucleoprotein. In terms of processing, envelope polyprotein precursor is quickly cleaved in vivo just after synthesis, presumably by host signal peptidase.

It localises to the virion membrane. The protein resides in the host cell surface. It is found in the host Golgi apparatus membrane. Its subcellular location is the host endoplasmic reticulum membrane. Its function is as follows. Forms homotetramers with glycoprotein N at the surface of the virion. Attaches the virion to host cell receptors including integrin ITGAV/ITGB3. This attachment induces virion internalization predominantly through clathrin-dependent endocytosis. Class II fusion protein that promotes fusion of viral membrane with host endosomal membrane after endocytosis of the virion. The sequence is that of Envelope glycoprotein (GP) from Homo sapiens (Human).